The sequence spans 1342 residues: DNA-directed RNA polymerase subunit beta (1342 aa).

It belongs to the RNA polymerase beta chain family. The RNAP catalytic core consists of 2 alpha, 1 beta, 1 beta' and 1 omega subunit. When a sigma factor is associated with the core the holoenzyme is formed, which can initiate transcription.

The enzyme catalyses RNA(n) + a ribonucleoside 5'-triphosphate = RNA(n+1) + diphosphate. DNA-dependent RNA polymerase catalyzes the transcription of DNA into RNA using the four ribonucleoside triphosphates as substrates. The polypeptide is DNA-directed RNA polymerase subunit beta (Actinobacillus pleuropneumoniae serotype 3 (strain JL03)).